A 235-amino-acid polypeptide reads, in one-letter code: Large ribosomal subunit protein uL2 (235 aa).

A disordered region spans residues 197–218; that stretch reads VAMNPVDHPHGGGEGKTSGGRH.

It belongs to the universal ribosomal protein uL2 family. In terms of assembly, part of the 50S ribosomal subunit. Forms a bridge to the 30S subunit in the 70S ribosome.

One of the primary rRNA binding proteins. Required for association of the 30S and 50S subunits to form the 70S ribosome, for tRNA binding and peptide bond formation. It has been suggested to have peptidyltransferase activity; this is somewhat controversial. Makes several contacts with the 16S rRNA in the 70S ribosome. The polypeptide is Large ribosomal subunit protein uL2 (rplB) (Carsonella ruddii (strain PV)).